Here is a 200-residue protein sequence, read N- to C-terminus: Imidazoleglycerol-phosphate dehydratase (200 aa).

Belongs to the imidazoleglycerol-phosphate dehydratase family.

The protein resides in the cytoplasm. It carries out the reaction D-erythro-1-(imidazol-4-yl)glycerol 3-phosphate = 3-(imidazol-4-yl)-2-oxopropyl phosphate + H2O. It functions in the pathway amino-acid biosynthesis; L-histidine biosynthesis; L-histidine from 5-phospho-alpha-D-ribose 1-diphosphate: step 6/9. The polypeptide is Imidazoleglycerol-phosphate dehydratase (Renibacterium salmoninarum (strain ATCC 33209 / DSM 20767 / JCM 11484 / NBRC 15589 / NCIMB 2235)).